A 349-amino-acid chain; its full sequence is MAELLAIKWDDNRDKLILLDQTILPNKIEYIEYDTAEGVYDSIKDMIVRGAPAIGVTAAYGLYFAAKVAPEDKFEGFFKYLKEKSAYLDSSRPTAVNLSWALKVMESKALENKDKDVKEIKSILREEAKRIHEEDIEICKTIGENLITLLKDGVGILTHCNAGQLATSKYGTATSPMYLAKEKGWNFKVYSDETRPRLQGSTLTALELYEAGIDVTTITDNMAAMVMSQGKIDAVIVGCDRIAANGDTANKIGTMGVSILAKYFGIPMYIAAPTPSIDINTKTGEDIPIEERNSEEVTSRFGVWTAPKGVKVYNPGFDVTPHENITAIVTEKGIVYPPFKENLKKLFEK.

Residues 49 to 51 (RGA), R92, and Q199 each bind substrate. D240 acts as the Proton donor in catalysis. 250–251 (NK) is a substrate binding site.

Belongs to the EIF-2B alpha/beta/delta subunits family. DrdI subfamily.

The enzyme catalyses 5-deoxy-alpha-D-ribose 1-phosphate = 5-deoxy-D-ribulose 1-phosphate. Its pathway is carbohydrate degradation. In terms of biological role, catalyzes the isomerization of 5-deoxy-alpha-D-ribose 1-phosphate to 5-deoxy-D-ribulose 1-phosphate, as part of a 5-deoxyribose salvage pathway that recycles this toxic radical SAM enzyme by-product to mainstream metabolites. This Clostridium botulinum (strain Langeland / NCTC 10281 / Type F) protein is 5-deoxyribose 1-phosphate isomerase.